Reading from the N-terminus, the 30-residue chain is Uperin-6.2 (30 aa).

Expressed by the skin dorsal glands.

The protein resides in the secreted. The polypeptide is Uperin-6.2 (Uperoleia inundata (Floodplain toadlet)).